The primary structure comprises 256 residues: Thiazole synthase (256 aa).

K95 acts as the Schiff-base intermediate with DXP in catalysis. Residues G156, 182-183, and 204-205 each bind 1-deoxy-D-xylulose 5-phosphate; these read AG and NT.

This sequence belongs to the ThiG family. In terms of assembly, homotetramer. Forms heterodimers with either ThiH or ThiS.

It localises to the cytoplasm. It catalyses the reaction [ThiS sulfur-carrier protein]-C-terminal-Gly-aminoethanethioate + 2-iminoacetate + 1-deoxy-D-xylulose 5-phosphate = [ThiS sulfur-carrier protein]-C-terminal Gly-Gly + 2-[(2R,5Z)-2-carboxy-4-methylthiazol-5(2H)-ylidene]ethyl phosphate + 2 H2O + H(+). It participates in cofactor biosynthesis; thiamine diphosphate biosynthesis. Its function is as follows. Catalyzes the rearrangement of 1-deoxy-D-xylulose 5-phosphate (DXP) to produce the thiazole phosphate moiety of thiamine. Sulfur is provided by the thiocarboxylate moiety of the carrier protein ThiS. In vitro, sulfur can be provided by H(2)S. This is Thiazole synthase from Escherichia coli O7:K1 (strain IAI39 / ExPEC).